Consider the following 463-residue polypeptide: Mitochondrial dynamics protein MID51 (463 aa).

Over 1–23 (MAGAGERKGKKDDNGIGTAIDFV) the chain is Mitochondrial intermembrane. A helical membrane pass occupies residues 24 to 46 (LSNARLVLGVGGAAMLGIATLAV). The Cytoplasmic segment spans residues 47 to 463 (KRMYDRAISA…LSEPEVLLQT (417 aa)). A dimerization region spans residues 49-195 (MYDRAISAPT…LSGSLYDDLQ (147 aa)). Residues Ser-55, Ser-59, Ser-79, and Ser-94 each carry the phosphoserine modification. A disordered region spans residues 57–77 (PTSPTRLSHSGKRSWEEPNWM). Positions 160 to 169 (AAVDICAELR) are important for interaction with DNM1L. Positions 187, 189, and 201 each coordinate ADP. Residues 234-243 (RRENPEYFPR) form an important for interaction with DNM1L region. Residues Ser-340, Arg-342, and Lys-368 each coordinate ADP.

Belongs to the MID49/MID51 family. As to quaternary structure, homodimer. Interacts with DNM1L.

It localises to the mitochondrion outer membrane. Mitochondrial outer membrane protein which regulates mitochondrial fission/fusion dynamics. Promotes the recruitment and association of the fission mediator dynamin-related protein 1 (DNM1L) to the mitochondrial surface independently of the mitochondrial fission FIS1 and MFF proteins. Regulates DNM1L GTPase activity and DNM1L oligomerization. Binds ADP and can also bind GDP, although with lower affinity. Does not bind CDP, UDP, ATP, AMP or GTP. Inhibits DNM1L GTPase activity in the absence of bound ADP. Requires ADP to stimulate DNM1L GTPase activity and the assembly of DNM1L into long, oligomeric tubules with a spiral pattern, as opposed to the ring-like DNM1L oligomers observed in the absence of bound ADP. Does not require ADP for its function in recruiting DNM1L. The protein is Mitochondrial dynamics protein MID51 (Mief1) of Rattus norvegicus (Rat).